Consider the following 375-residue polypeptide: Glutamate 5-kinase (375 aa).

K17 lines the ATP pocket. Positions 57, 144, and 156 each coordinate substrate. 176 to 177 (TD) lines the ATP pocket. One can recognise a PUA domain in the interval 283–361 (KGRLWLDTGA…HQIEQILGYV (79 aa)).

Belongs to the glutamate 5-kinase family.

Its subcellular location is the cytoplasm. The enzyme catalyses L-glutamate + ATP = L-glutamyl 5-phosphate + ADP. It functions in the pathway amino-acid biosynthesis; L-proline biosynthesis; L-glutamate 5-semialdehyde from L-glutamate: step 1/2. In terms of biological role, catalyzes the transfer of a phosphate group to glutamate to form L-glutamate 5-phosphate. The sequence is that of Glutamate 5-kinase from Nitrosococcus oceani (strain ATCC 19707 / BCRC 17464 / JCM 30415 / NCIMB 11848 / C-107).